A 597-amino-acid chain; its full sequence is Cell division cycle protein 23 homolog (597 aa).

An N-acetylalanine modification is found at alanine 2. 3 TPR repeats span residues 27 to 63, 73 to 112, and 114 to 144; these read SDLREIKKQLLLIAGLTRERGLLHSSKWSAELAFSLP, PPPITEEDAQDMDAYTLAKAYFDVKEYDRAAHFLHGCNSK, and AYFLYMYSRYLSGEKKKDDETVDSLGPLEKG. Lysine 147 participates in a covalent cross-link: Glycyl lysine isopeptide (Lys-Gly) (interchain with G-Cter in SUMO2). TPR repeat units lie at residues 169–200, 229–259, 263–293, 297–327, 331–361, 366–395, 400–432, and 433–466; these read GFGLYLYGVVLRKLDLVKEAIDVFVEATHVLP, MKEFFLAHIYTELQLIEEALQKYQNLIDVGF, SYIVSQIAVAYHNIRDIDKALSIFNELRKQD, IENMDTFSNLLYVRSMKSELSYLAHNLCEID, VETCCVIGNYYSLRSQHEKAALYFQRALKLN, GAWTLMGHEYMEMKNTSAAIQAYRHAIEVN, RAWYGLGQTYEILKMPFYCLYYYRRAHQLRPND, and SRMLVALGECYEKLNQLVEAKKCYWRAYAVGDVE. Tyrosine 273 carries the post-translational modification Phosphotyrosine. Lysine 467 carries the post-translational modification N6-acetyllysine. TPR repeat units lie at residues 468–500 and 504–540; these read MALVKLAKLHEQLTESEQAAQCYIKYIQDIYSC and VEHLEESTAFRYLAQYYFKCKLWDEASTCAQKCCAFN. Residues threonine 562 and threonine 565 each carry the phosphothreonine modification. Serine 578 is modified (phosphoserine). Phosphothreonine is present on threonine 582. Phosphoserine is present on residues serine 588 and serine 593. Position 596 is a phosphothreonine (threonine 596).

The protein belongs to the APC8/CDC23 family. In terms of assembly, the mammalian APC/C is composed at least of 14 distinct subunits ANAPC1, ANAPC2, CDC27/APC3, ANAPC4, ANAPC5, CDC16/APC6, ANAPC7, CDC23/APC8, ANAPC10, ANAPC11, CDC26/APC12, ANAPC13, ANAPC15 and ANAPC16 that assemble into a complex of at least 19 chains with a combined molecular mass of around 1.2 MDa; APC/C interacts with FZR1 and FBXO5. Interacts with FBXO43; the interaction is direct. Phosphorylated. Phosphorylation on Thr-562 occurs specifically during mitosis.

It functions in the pathway protein modification; protein ubiquitination. Functionally, component of the anaphase promoting complex/cyclosome (APC/C), a cell cycle-regulated E3 ubiquitin ligase that controls progression through mitosis and the G1 phase of the cell cycle. The APC/C complex acts by mediating ubiquitination and subsequent degradation of target proteins: it mainly mediates the formation of 'Lys-11'-linked polyubiquitin chains and, to a lower extent, the formation of 'Lys-48'- and 'Lys-63'-linked polyubiquitin chains. The APC/C complex catalyzes assembly of branched 'Lys-11'-/'Lys-48'-linked branched ubiquitin chains on target proteins. This chain is Cell division cycle protein 23 homolog (CDC23), found in Homo sapiens (Human).